Reading from the N-terminus, the 276-residue chain is Merozoite surface protein 2 (276 aa).

A signal peptide spans 1-20; it reads MKVIKTLSIINFFIFVTFNI. Residues asparagine 22 and asparagine 36 are each glycosylated (N-linked (GlcNAc...) asparagine). A polymorphic region region spans residues 44–202; that stretch reads AESNPSTGAG…EQTESPELQS (159 aa). The interval 44 to 242 is disordered; the sequence is AESNPSTGAG…CTDGNKENCG (199 aa). Over residues 51–90 the composition is skewed to gly residues; sequence GAGGSGSAGGSGSAGGSGSAGGSGSAGGSGSAGSGDGNGA. 5 tandem repeats follow at residues 53-58, 59-64, 65-70, 71-76, and 77-82. The 5 X 6 AA tandem repeats of G-G-S-G-S-A stretch occupies residues 53 to 82; it reads GGSGSAGGSGSAGGSGSAGGSGSAGGSGSA. Over residues 91-127 the composition is skewed to low complexity; that stretch reads NPGADAERSPSTPATTTTTTTTNDAEASTSTSSENPN. Composition is skewed to polar residues over residues 143–169, 176–187, and 194–204; these read KPNQANKETQNNSNVQQDSQTKSNVPP, KSPTAQPEQAEN, and QTESPELQSAP. N-linked (GlcNAc...) asparagine glycosylation is present at asparagine 153. A glycan (N-linked (GlcNAc...) asparagine) is linked at asparagine 225. The segment covering 229-238 has biased composition (basic and acidic residues); sequence SQKECTDGNK. Cysteine 233 and cysteine 241 are disulfide-bonded. The N-linked (GlcNAc...) asparagine glycan is linked to asparagine 250. Asparagine 250 carries GPI-anchor amidated asparagine lipidation. A propeptide spans 251-276 (removed in mature form); it reads SSNIASINKFVVLISATLVLSFAIFI.

It is found in the cell membrane. Its function is as follows. May play a role in the merozoite attachment to the erythrocyte. The chain is Merozoite surface protein 2 from Plasmodium falciparum (isolate 7G8).